A 432-amino-acid polypeptide reads, in one-letter code: Adenylosuccinate synthetase (432 aa).

GTP contacts are provided by residues 12-18 and 40-42; these read GDEGKGK and GHT. Catalysis depends on Asp13, which acts as the Proton acceptor. 2 residues coordinate Mg(2+): Asp13 and Gly40. Residues 13 to 16, 38 to 41, Thr130, Arg144, Gln225, Thr240, and Arg304 each bind IMP; these read DEGK and NAGH. The active-site Proton donor is His41. A substrate-binding site is contributed by 300-306; it reads STTGRPR. GTP contacts are provided by residues Arg306, 332–334, and 414–416; these read KLD and SVG.

This sequence belongs to the adenylosuccinate synthetase family. In terms of assembly, homodimer. Mg(2+) serves as cofactor.

The protein localises to the cytoplasm. The enzyme catalyses IMP + L-aspartate + GTP = N(6)-(1,2-dicarboxyethyl)-AMP + GDP + phosphate + 2 H(+). It participates in purine metabolism; AMP biosynthesis via de novo pathway; AMP from IMP: step 1/2. In terms of biological role, plays an important role in the de novo pathway of purine nucleotide biosynthesis. Catalyzes the first committed step in the biosynthesis of AMP from IMP. This Geobacter sp. (strain M21) protein is Adenylosuccinate synthetase.